Consider the following 555-residue polypeptide: Hydroxylamine reductase (555 aa).

Cysteine 3, cysteine 6, cysteine 18, and cysteine 25 together coordinate [4Fe-4S] cluster. The hybrid [4Fe-2O-2S] cluster site is built by histidine 252, glutamate 276, cysteine 320, cysteine 407, cysteine 435, cysteine 460, glutamate 494, and lysine 496. A Cysteine persulfide modification is found at cysteine 407.

The protein belongs to the HCP family. [4Fe-4S] cluster serves as cofactor. It depends on hybrid [4Fe-2O-2S] cluster as a cofactor.

It localises to the cytoplasm. It catalyses the reaction A + NH4(+) + H2O = hydroxylamine + AH2 + H(+). Functionally, catalyzes the reduction of hydroxylamine to form NH(3) and H(2)O. The sequence is that of Hydroxylamine reductase from Burkholderia ambifaria (strain MC40-6).